We begin with the raw amino-acid sequence, 473 residues long: MALKDTGSGGSTILPISEMVSSSSSPGASAAAAPGPCAPSPFPEVVELNVGGQVYVTKHSTLLSVPDSTLASMFSPSSPRGGARRRGELPRDSRARFFIDRDGFLFRYVLDYLRDKQLALPEHFPEKERLLREAEYFQLTDLVKLLSPKVTKQNSLNDEGCQSDLEDNVSQGSSDALLLRGAAAAVPSGPGAHGGGGGGGAQDKRSGFLTLGYRGSYTTVRDNQADAKFRRVARIMVCGRIALAKEVFGDTLNESRDPDRQPEKYTSRFYLKFTYLEQAFDRLSEAGFHMVACNSSGTAAFVNQYRDDKIWSSYTEYIFFRPPQKIVSPKQEHEDRKHDKVTDKGSESGTSCNELSTSSCDSHSEASTPQDNPSSAQQATAHQPNTLTLDRPSKKAPVQWIPPPDKRRNSELFQTLISKSRETNLSKKKVCEKLSVEEEMKKCIQDFKKIHIPDYFPERKRQWQSELLQKYGL.

Residues 1–36 (MALKDTGSGGSTILPISEMVSSSSSPGASAAAAPGP) form a disordered region. The span at 21 to 35 (SSSSSPGASAAAAPG) shows a compositional bias: low complexity. One can recognise a BTB domain in the interval 44 to 122 (EVVELNVGGQ…LRDKQLALPE (79 aa)). The residue at position 78 (Ser78) is a Phosphoserine. At Arg80 the chain carries Omega-N-methylarginine. The interval 326–409 (IVSPKQEHED…WIPPPDKRRN (84 aa)) is disordered. Residues 330-346 (KQEHEDRKHDKVTDKGS) show a composition bias toward basic and acidic residues. The span at 347 to 388 (ESGTSCNELSTSSCDSHSEASTPQDNPSSAQQATAHQPNTLT) shows a compositional bias: polar residues. Ser410 carries the phosphoserine modification.

Interacts as a tetramer with GABRB1 and GABRB2.

It is found in the presynaptic cell membrane. Its subcellular location is the postsynaptic cell membrane. Functionally, auxiliary subunit of GABA-B receptors that determine the pharmacology and kinetics of the receptor response. Increases agonist potency and markedly alter the G-protein signaling of the receptors by accelerating onset and promoting desensitization. In Homo sapiens (Human), this protein is BTB/POZ domain-containing protein KCTD8 (KCTD8).